The primary structure comprises 419 residues: UDP-N-acetylglucosamine 1-carboxyvinyltransferase (419 aa).

Phosphoenolpyruvate is bound at residue 22–23 (KN). Residue arginine 93 participates in UDP-N-acetyl-alpha-D-glucosamine binding. Residue cysteine 117 is the Proton donor of the active site. Position 117 is a 2-(S-cysteinyl)pyruvic acid O-phosphothioketal (cysteine 117). 2 residues coordinate UDP-N-acetyl-alpha-D-glucosamine: aspartate 306 and isoleucine 328.

Belongs to the EPSP synthase family. MurA subfamily.

It is found in the cytoplasm. The catalysed reaction is phosphoenolpyruvate + UDP-N-acetyl-alpha-D-glucosamine = UDP-N-acetyl-3-O-(1-carboxyvinyl)-alpha-D-glucosamine + phosphate. It functions in the pathway cell wall biogenesis; peptidoglycan biosynthesis. Its function is as follows. Cell wall formation. Adds enolpyruvyl to UDP-N-acetylglucosamine. In Magnetococcus marinus (strain ATCC BAA-1437 / JCM 17883 / MC-1), this protein is UDP-N-acetylglucosamine 1-carboxyvinyltransferase.